A 560-amino-acid chain; its full sequence is Potassium-transporting ATPase potassium-binding subunit (560 aa).

12 helical membrane passes run 6 to 26 (FLLI…LGSL), 63 to 83 (LLAI…ILMC), 132 to 152 (GLAV…FALI), 175 to 195 (LWVL…QGAI), 250 to 270 (LTNV…CFAF), 282 to 302 (AILW…MWAE), 327 to 347 (FGIL…CGAV), 356 to 376 (ALGG…FGGV), 379 to 399 (GLYG…LMIG), 416 to 436 (MTAL…ALAM), 483 to 503 (LLLA…VMAI), and 524 to 544 (GALF…LTFI).

This sequence belongs to the KdpA family. The system is composed of three essential subunits: KdpA, KdpB and KdpC.

Its subcellular location is the cell inner membrane. Functionally, part of the high-affinity ATP-driven potassium transport (or Kdp) system, which catalyzes the hydrolysis of ATP coupled with the electrogenic transport of potassium into the cytoplasm. This subunit binds the periplasmic potassium ions and delivers the ions to the membrane domain of KdpB through an intramembrane tunnel. In Cronobacter sakazakii (strain ATCC BAA-894) (Enterobacter sakazakii), this protein is Potassium-transporting ATPase potassium-binding subunit.